We begin with the raw amino-acid sequence, 181 residues long: DNA-packaging protein NU1 homolog (181 aa).

To phage lambda DNA packaging protein NU1.

The protein is DNA-packaging protein NU1 homolog (nohD) of Escherichia coli (strain K12).